Reading from the N-terminus, the 229-residue chain is Potassium/proton antiporter CemA (229 aa).

4 helical membrane passes run F7–F27, I114–L134, I154–V174, and I189–I209.

This sequence belongs to the CemA family.

The protein localises to the plastid. It is found in the chloroplast inner membrane. The catalysed reaction is K(+)(in) + H(+)(out) = K(+)(out) + H(+)(in). Contributes to K(+)/H(+) antiport activity by supporting proton efflux to control proton extrusion and homeostasis in chloroplasts in a light-dependent manner to modulate photosynthesis. Prevents excessive induction of non-photochemical quenching (NPQ) under continuous-light conditions. Indirectly promotes efficient inorganic carbon uptake into chloroplasts. This chain is Potassium/proton antiporter CemA, found in Coffea arabica (Arabian coffee).